The primary structure comprises 239 residues: MLLPQPLIHGRLVSRYKRFFADLVLDDGQEITAHCPNPGAMLGVKDAGQGAWVSWSDDPKRKLAYTLQMVEQGNALVGINTLLPNKLVAEALAADALPELSGYATIKPEVKYAEASRVDFLLTHPDRPPCWLEVKNCHFSRTPGLAEFPDCKAQRSTRHLEDLSAQVREGHRAVVLFVVQREDCETFSACAELDPAFAAGLEAAAKAGVEVLVYACEMGTQAVRIARRILWSHAHLTAI.

It belongs to the SfsA family.

The chain is Sugar fermentation stimulation protein homolog from Caulobacter vibrioides (strain ATCC 19089 / CIP 103742 / CB 15) (Caulobacter crescentus).